The following is a 1003-amino-acid chain: Serine/threonine-protein kinase spk-1 (1003 aa).

Disordered stretches follow at residues 92 to 112 (NSTN…TQNE), 169 to 309 (NEND…SATS), and 337 to 408 (RPSI…KRGG). A compositionally biased stretch (acidic residues) spans 202–211 (SDEEDVESQD). The segment covering 248-265 (SNDDKNEKDVLVDEDTSK) has biased composition (basic and acidic residues). The segment covering 285–300 (TIDSSVSSSTSSSSTG) has biased composition (low complexity). Basic and acidic residues predominate over residues 346 to 359 (KKTEVNANEERLDD). A Protein kinase domain is found at 422 to 904 (YHVIRKLGWG…AKIALKHPFL (483 aa)). ATP contacts are provided by residues 428–436 (LGWGHFSTV) and Lys451. Catalysis depends on Asp555, which acts as the Proton acceptor. The interval 927–1003 (DGLIPEPFDG…DIERFQLDLQ (77 aa)) is disordered. Basic and acidic residues predominate over residues 936-953 (GNEHQEVYRDENDSRSAS). Residues 954-964 (ERSANSRSAGG) are compositionally biased toward low complexity. Residues 983 to 992 (VITNNETTDI) are compositionally biased toward polar residues. The segment covering 994 to 1003 (DIERFQLDLQ) has biased composition (basic and acidic residues).

This sequence belongs to the protein kinase superfamily. Ser/Thr protein kinase family. Interacts with rsp-3. In terms of tissue distribution, predominantly coexpressed with rsp-3 in adult hermaphrodite germlines.

The enzyme catalyses L-seryl-[protein] + ATP = O-phospho-L-seryl-[protein] + ADP + H(+). It carries out the reaction L-threonyl-[protein] + ATP = O-phospho-L-threonyl-[protein] + ADP + H(+). Its function is as follows. Required for embryogenesis and germline development in both adult hermaphrodites and males. SR-protein kinase (SRPK) that binds directly to and phosphorylates the RS domain of rsp-3/CeSF2 in vitro. The protein is Serine/threonine-protein kinase spk-1 (spk-1) of Caenorhabditis elegans.